Consider the following 298-residue polypeptide: Glutamyl-Q tRNA(Asp) synthetase (298 aa).

Residues Arg8–Ser12 and Glu44 each bind L-glutamate. Positions Pro11–Ser21 match the 'HIGH' region motif. Residues Cys100, Cys102, Tyr123, and Cys127 each contribute to the Zn(2+) site. L-glutamate is bound by residues Tyr183 and Arg201. Positions Lys239–Gln243 match the 'KMSKS' region motif. Residue Lys242 coordinates ATP.

The protein belongs to the class-I aminoacyl-tRNA synthetase family. GluQ subfamily. It depends on Zn(2+) as a cofactor.

Its function is as follows. Catalyzes the tRNA-independent activation of glutamate in presence of ATP and the subsequent transfer of glutamate onto a tRNA(Asp). Glutamate is transferred on the 2-amino-5-(4,5-dihydroxy-2-cyclopenten-1-yl) moiety of the queuosine in the wobble position of the QUC anticodon. The sequence is that of Glutamyl-Q tRNA(Asp) synthetase from Burkholderia orbicola (strain MC0-3).